Reading from the N-terminus, the 206-residue chain is Small ribosomal subunit protein uS5 (206 aa).

Residues 1–15 (MTDTPTKQEIQSKND) show a composition bias toward polar residues. The interval 1–50 (MTDTPTKQEIQSKNDNVPAATPVEQKKNNRNDRKRNRRGDSKNLERDSDW) is disordered. Residues 38 to 50 (RGDSKNLERDSDW) are compositionally biased toward basic and acidic residues. In terms of domain architecture, S5 DRBM spans 50–113 (WQERVVQIRR…SDGKKNLVRV (64 aa)).

Belongs to the universal ribosomal protein uS5 family. In terms of assembly, part of the 30S ribosomal subunit. Contacts proteins S4 and S8.

Functionally, with S4 and S12 plays an important role in translational accuracy. Located at the back of the 30S subunit body where it stabilizes the conformation of the head with respect to the body. This Prochlorococcus marinus (strain AS9601) protein is Small ribosomal subunit protein uS5.